The following is a 20-amino-acid chain: Phosphoglycerate kinase (20 aa).

Positions 1–20 (MNKKSIRNVNLKGKRVFDRV) are disordered.

The protein belongs to the phosphoglycerate kinase family. As to quaternary structure, monomer.

It is found in the cytoplasm. The catalysed reaction is (2R)-3-phosphoglycerate + ATP = (2R)-3-phospho-glyceroyl phosphate + ADP. Its pathway is carbohydrate degradation; glycolysis; pyruvate from D-glyceraldehyde 3-phosphate: step 2/5. This Bacillus cereus protein is Phosphoglycerate kinase.